A 276-amino-acid polypeptide reads, in one-letter code: D-aminoacyl-tRNA deacylase (276 aa).

Belongs to the DtdA deacylase family. Monomer. Zn(2+) serves as cofactor.

It carries out the reaction a D-aminoacyl-tRNA + H2O = a tRNA + a D-alpha-amino acid + H(+). The catalysed reaction is glycyl-tRNA(Ala) + H2O = tRNA(Ala) + glycine + H(+). D-aminoacyl-tRNA deacylase with broad substrate specificity. By recycling D-aminoacyl-tRNA to D-amino acids and free tRNA molecules, this enzyme counteracts the toxicity associated with the formation of D-aminoacyl-tRNA entities in vivo. This Staphylothermus marinus (strain ATCC 43588 / DSM 3639 / JCM 9404 / F1) protein is D-aminoacyl-tRNA deacylase.